Reading from the N-terminus, the 251-residue chain is DNA repair protein RecO (251 aa).

This sequence belongs to the RecO family.

In terms of biological role, involved in DNA repair and RecF pathway recombination. The sequence is that of DNA repair protein RecO from Nitratidesulfovibrio vulgaris (strain ATCC 29579 / DSM 644 / CCUG 34227 / NCIMB 8303 / VKM B-1760 / Hildenborough) (Desulfovibrio vulgaris).